Reading from the N-terminus, the 227-residue chain is Cytochrome c oxidase subunit 2 (227 aa).

Residues 1–14 are Mitochondrial intermembrane-facing; that stretch reads MAHPVQLSLQDATS. A helical membrane pass occupies residues 15–45; that stretch reads PIMEELITFHDHAFMAMSLISFLVLYALALT. Over 46–59 the chain is Mitochondrial matrix; it reads LTTKLTNTNITDAQ. Residues 60 to 87 form a helical membrane-spanning segment; that stretch reads EMETIWTILPAVILILIALPSLRVLYLT. Topologically, residues 88 to 227 are mitochondrial intermembrane; sequence DEVNDPSLTI…IFEMGPVFTL (140 aa). 6 residues coordinate Cu cation: His-161, Cys-196, Glu-198, Cys-200, His-204, and Met-207. Mg(2+) is bound at residue Glu-198.

This sequence belongs to the cytochrome c oxidase subunit 2 family. In terms of assembly, component of the cytochrome c oxidase (complex IV, CIV), a multisubunit enzyme composed of 14 subunits. The complex is composed of a catalytic core of 3 subunits MT-CO1, MT-CO2 and MT-CO3, encoded in the mitochondrial DNA, and 11 supernumerary subunits COX4I, COX5A, COX5B, COX6A, COX6B, COX6C, COX7A, COX7B, COX7C, COX8 and NDUFA4, which are encoded in the nuclear genome. The complex exists as a monomer or a dimer and forms supercomplexes (SCs) in the inner mitochondrial membrane with NADH-ubiquinone oxidoreductase (complex I, CI) and ubiquinol-cytochrome c oxidoreductase (cytochrome b-c1 complex, complex III, CIII), resulting in different assemblies (supercomplex SCI(1)III(2)IV(1) and megacomplex MCI(2)III(2)IV(2)). Found in a complex with TMEM177, COA6, COX18, COX20, SCO1 and SCO2. Interacts with TMEM177 in a COX20-dependent manner. Interacts with COX20. Interacts with COX16. Cu cation serves as cofactor.

Its subcellular location is the mitochondrion inner membrane. The enzyme catalyses 4 Fe(II)-[cytochrome c] + O2 + 8 H(+)(in) = 4 Fe(III)-[cytochrome c] + 2 H2O + 4 H(+)(out). Functionally, component of the cytochrome c oxidase, the last enzyme in the mitochondrial electron transport chain which drives oxidative phosphorylation. The respiratory chain contains 3 multisubunit complexes succinate dehydrogenase (complex II, CII), ubiquinol-cytochrome c oxidoreductase (cytochrome b-c1 complex, complex III, CIII) and cytochrome c oxidase (complex IV, CIV), that cooperate to transfer electrons derived from NADH and succinate to molecular oxygen, creating an electrochemical gradient over the inner membrane that drives transmembrane transport and the ATP synthase. Cytochrome c oxidase is the component of the respiratory chain that catalyzes the reduction of oxygen to water. Electrons originating from reduced cytochrome c in the intermembrane space (IMS) are transferred via the dinuclear copper A center (CU(A)) of subunit 2 and heme A of subunit 1 to the active site in subunit 1, a binuclear center (BNC) formed by heme A3 and copper B (CU(B)). The BNC reduces molecular oxygen to 2 water molecules using 4 electrons from cytochrome c in the IMS and 4 protons from the mitochondrial matrix. The protein is Cytochrome c oxidase subunit 2 (MT-CO2) of Macaca fascicularis (Crab-eating macaque).